The following is a 300-amino-acid chain: Ribosomal protein L11 methyltransferase (300 aa).

S-adenosyl-L-methionine is bound by residues Thr-152, Gly-173, Asp-195, and Asn-234.

The protein belongs to the methyltransferase superfamily. PrmA family.

It localises to the cytoplasm. It catalyses the reaction L-lysyl-[protein] + 3 S-adenosyl-L-methionine = N(6),N(6),N(6)-trimethyl-L-lysyl-[protein] + 3 S-adenosyl-L-homocysteine + 3 H(+). Functionally, methylates ribosomal protein L11. This chain is Ribosomal protein L11 methyltransferase, found in Burkholderia multivorans (strain ATCC 17616 / 249).